The sequence spans 594 residues: Potassium-transporting ATPase potassium-binding subunit (594 aa).

The next 10 helical transmembrane spans lie at 3-23 (ADFL…APLL), 67-87 (AVAM…LQRL), 136-156 (ALTV…IALV), 179-199 (LYVL…QGVV), 287-307 (LEML…GEMV), 314-334 (VAIL…AAYF), 415-435 (GLYG…LMIG), 453-473 (VALV…VAVL), 519-539 (VLLG…ILAL), and 562-582 (LFVA…YVPA).

It belongs to the KdpA family. In terms of assembly, the system is composed of three essential subunits: KdpA, KdpB and KdpC.

The protein resides in the cell inner membrane. Part of the high-affinity ATP-driven potassium transport (or Kdp) system, which catalyzes the hydrolysis of ATP coupled with the electrogenic transport of potassium into the cytoplasm. This subunit binds the periplasmic potassium ions and delivers the ions to the membrane domain of KdpB through an intramembrane tunnel. This Bordetella pertussis (strain Tohama I / ATCC BAA-589 / NCTC 13251) protein is Potassium-transporting ATPase potassium-binding subunit.